Here is a 243-residue protein sequence, read N- to C-terminus: Aspartate/glutamate leucyltransferase (243 aa).

The protein belongs to the R-transferase family. Bpt subfamily.

It localises to the cytoplasm. It catalyses the reaction N-terminal L-glutamyl-[protein] + L-leucyl-tRNA(Leu) = N-terminal L-leucyl-L-glutamyl-[protein] + tRNA(Leu) + H(+). The catalysed reaction is N-terminal L-aspartyl-[protein] + L-leucyl-tRNA(Leu) = N-terminal L-leucyl-L-aspartyl-[protein] + tRNA(Leu) + H(+). Its function is as follows. Functions in the N-end rule pathway of protein degradation where it conjugates Leu from its aminoacyl-tRNA to the N-termini of proteins containing an N-terminal aspartate or glutamate. The chain is Aspartate/glutamate leucyltransferase from Teredinibacter turnerae (strain ATCC 39867 / T7901).